Here is a 265-residue protein sequence, read N- to C-terminus: Inositol-1-monophosphatase (265 aa).

The Mg(2+) site is built by glutamate 69, aspartate 87, isoleucine 89, and aspartate 90. Glutamate 69 provides a ligand contact to substrate. Substrate contacts are provided by residues 89-92, arginine 185, and aspartate 214; that span reads IDGT. Aspartate 214 is a Mg(2+) binding site.

It belongs to the inositol monophosphatase superfamily. It depends on Mg(2+) as a cofactor.

It catalyses the reaction a myo-inositol phosphate + H2O = myo-inositol + phosphate. The catalysed reaction is a ribonucleoside 5'-phosphate + H2O = a ribonucleoside + phosphate. Its function is as follows. Hydrolyzes myo-inositol monophosphate. Catalyzes the dephosphorylation of GMP and IMP. The chain is Inositol-1-monophosphatase from Bacillus subtilis (strain 168).